The following is a 353-amino-acid chain: S-adenosylmethionine:tRNA ribosyltransferase-isomerase (353 aa).

Belongs to the QueA family. In terms of assembly, monomer.

Its subcellular location is the cytoplasm. It catalyses the reaction 7-aminomethyl-7-carbaguanosine(34) in tRNA + S-adenosyl-L-methionine = epoxyqueuosine(34) in tRNA + adenine + L-methionine + 2 H(+). It participates in tRNA modification; tRNA-queuosine biosynthesis. Transfers and isomerizes the ribose moiety from AdoMet to the 7-aminomethyl group of 7-deazaguanine (preQ1-tRNA) to give epoxyqueuosine (oQ-tRNA). This is S-adenosylmethionine:tRNA ribosyltransferase-isomerase from Rickettsia bellii (strain OSU 85-389).